The primary structure comprises 343 residues: Allantoicase (343 aa).

It belongs to the allantoicase family.

The catalysed reaction is allantoate + H2O = (S)-ureidoglycolate + urea. The protein operates within nitrogen metabolism; (S)-allantoin degradation; (S)-ureidoglycolate from allantoate (aminidohydrolase route): step 1/1. Its function is as follows. Utilization of purines as secondary nitrogen sources, when primary sources are limiting. In Saccharomyces cerevisiae (strain ATCC 204508 / S288c) (Baker's yeast), this protein is Allantoicase (DAL2).